We begin with the raw amino-acid sequence, 444 residues long: Homogentisate 1,2-dioxygenase (444 aa).

H298 acts as the Proton acceptor in catalysis. 2 residues coordinate Fe cation: H341 and E347. Homogentisate-binding residues include Y356 and H377. H377 contributes to the Fe cation binding site.

It belongs to the homogentisate dioxygenase family. As to quaternary structure, hexamer; dimer of trimers. Fe cation is required as a cofactor.

The enzyme catalyses homogentisate + O2 = 4-maleylacetoacetate + H(+). The protein operates within amino-acid degradation; L-phenylalanine degradation; acetoacetate and fumarate from L-phenylalanine: step 4/6. Involved in the catabolism of homogentisate (2,5-dihydroxyphenylacetate or 2,5-OH-PhAc), a central intermediate in the degradation of phenylalanine and tyrosine. Catalyzes the oxidative ring cleavage of the aromatic ring of homogentisate to yield maleylacetoacetate. The sequence is that of Homogentisate 1,2-dioxygenase from Burkholderia ambifaria (strain MC40-6).